Here is a 628-residue protein sequence, read N- to C-terminus: 1-deoxy-D-xylulose-5-phosphate synthase (628 aa).

Residues His-72 and 113-115 (GHS) each bind thiamine diphosphate. Asp-144 provides a ligand contact to Mg(2+). Thiamine diphosphate is bound by residues 145–146 (GA), Asn-173, Tyr-284, and Glu-367. Position 173 (Asn-173) interacts with Mg(2+).

Belongs to the transketolase family. DXPS subfamily. As to quaternary structure, homodimer. It depends on Mg(2+) as a cofactor. Requires thiamine diphosphate as cofactor.

The enzyme catalyses D-glyceraldehyde 3-phosphate + pyruvate + H(+) = 1-deoxy-D-xylulose 5-phosphate + CO2. Its pathway is metabolic intermediate biosynthesis; 1-deoxy-D-xylulose 5-phosphate biosynthesis; 1-deoxy-D-xylulose 5-phosphate from D-glyceraldehyde 3-phosphate and pyruvate: step 1/1. Functionally, catalyzes the acyloin condensation reaction between C atoms 2 and 3 of pyruvate and glyceraldehyde 3-phosphate to yield 1-deoxy-D-xylulose-5-phosphate (DXP). The polypeptide is 1-deoxy-D-xylulose-5-phosphate synthase (Exiguobacterium sibiricum (strain DSM 17290 / CCUG 55495 / CIP 109462 / JCM 13490 / 255-15)).